A 496-amino-acid polypeptide reads, in one-letter code: Pituitary adenylate cyclase-activating polypeptide type I receptor (496 aa).

The first 20 residues, 1 to 20 (MARTLQLSLTALLLLPMAIA), serve as a signal peptide directing secretion. The Extracellular portion of the chain corresponds to 21–152 (MHSDCIFKKE…SGDQDYYYLS (132 aa)). Disulfide bonds link cysteine 34–cysteine 63, cysteine 54–cysteine 118, and cysteine 77–cysteine 134. Asparagine 48, asparagine 60, and asparagine 117 each carry an N-linked (GlcNAc...) asparagine glycan. The segment at 125 to 139 (EPFPHYFDACGFDDY) is important for ADCYAP1/PACAP ligand binding and specificity. Positions 125 to 139 (EPFPHYFDACGFDDY) are important for ligand binding and specificity. The chain crosses the membrane as a helical span at residues 153–177 (VKALYTVGYSTSLVTLTTAMVILCR). Over 178–187 (FRKLHCTRNF) the chain is Cytoplasmic. Residues 188–208 (IHMNLFVSFMLRAISVFIKDW) traverse the membrane as a helical segment. Topologically, residues 209-223 (ILYAEQDSSHCFVST) are extracellular. The chain crosses the membrane as a helical span at residues 224–249 (VECKAVMVFFHYCVVSNYFWLFIEGL). Cysteine 226 and cysteine 296 are joined by a disulfide. Over 250–267 (YLFTLLVETFFPERRYFY) the chain is Cytoplasmic. A helical transmembrane segment spans residues 268-290 (WYTIIGWGTPTVCVTVWAVLRLY). At 291-302 (FDDAGCWDMNDS) the chain is on the extracellular side. Residues 303 to 329 (TALWWVIKGPVVGSIMVNFVLFIGIII) form a helical membrane-spanning segment. Residues 330–347 (ILVQKLQSPDMGGNESSI) are Cytoplasmic-facing. Residues 348-402 (YFSCVQKCYCKPQRAQQHSCKMSELSTITLRLARSTLLLIPLFGIHYTVFAFSPE) form a helical membrane-spanning segment. The Extracellular segment spans residues 403–407 (NVSKR). The chain crosses the membrane as a helical span at residues 408–431 (ERLVFELGLGSFQGFVVAVLYCFL). Topologically, residues 432–496 (NGEVQAEIKR…SSLPADNLAT (65 aa)) are cytoplasmic. Serine 462 and serine 475 each carry phosphoserine.

Belongs to the G-protein coupled receptor 2 family. As to quaternary structure, interacts with maxadilan, a vasodilator peptide from Lutzomyia longipalpis saliva; the interaction results in ADCYAP1R1 activation.

The protein resides in the cell membrane. In terms of biological role, g protein-coupled receptor activated by the neuropeptide pituitary adenylate cyclase-activating polypeptide (ADCYAP1/PACAP). Binds both PACAP27 and PACAP38 bioactive peptides. Ligand binding causes a conformation change that triggers signaling via guanine nucleotide-binding proteins (G proteins) and modulates the activity of downstream effectors. Activates cAMP-dependent pathway. May regulate the release of adrenocorticotropin, luteinizing hormone, growth hormone, prolactin, epinephrine, and catecholamine. May play a role in spermatogenesis and sperm motility. Causes smooth muscle relaxation and secretion in the gastrointestinal tract. The sequence is that of Pituitary adenylate cyclase-activating polypeptide type I receptor from Mus musculus (Mouse).